The chain runs to 259 residues: Global transcriptional regulator CodY (259 aa).

The segment at 1–155 (MNLLQKTRKI…GATVVGMEIL (155 aa)) is GAF domain. The H-T-H motif DNA-binding region spans 203-222 (ASKIADRVGITRSVIVNALR). Serine 215 is modified (phosphoserine).

It belongs to the CodY family.

It is found in the cytoplasm. In terms of biological role, DNA-binding global transcriptional regulator which is involved in the adaptive response to starvation and acts by directly or indirectly controlling the expression of numerous genes in response to nutrient availability. During rapid exponential growth, CodY is highly active and represses genes whose products allow adaptation to nutrient depletion. This Geobacillus sp. (strain WCH70) protein is Global transcriptional regulator CodY.